The sequence spans 274 residues: Large ribosomal subunit protein uL2 (274 aa).

Disordered stretches follow at residues phenylalanine 35 to glycine 55 and alanine 224 to glycine 274. The span at asparagine 45–glycine 55 shows a compositional bias: basic residues. Basic and acidic residues predominate over residues lysine 263–glycine 274.

The protein belongs to the universal ribosomal protein uL2 family. In terms of assembly, part of the 50S ribosomal subunit. Forms a bridge to the 30S subunit in the 70S ribosome.

One of the primary rRNA binding proteins. Required for association of the 30S and 50S subunits to form the 70S ribosome, for tRNA binding and peptide bond formation. It has been suggested to have peptidyltransferase activity; this is somewhat controversial. Makes several contacts with the 16S rRNA in the 70S ribosome. The polypeptide is Large ribosomal subunit protein uL2 (Wolbachia pipientis subsp. Culex pipiens (strain wPip)).